The following is a 1006-amino-acid chain: MSAYYRNNWSEEDPDYPDYSGSQNRTQGYLKTQGYPDVPGPLNNPDYPGTRSNPYSVASRTRPDYPGSLAEPNYPRSLSNPDYSGTRSNAYSAASRTSPDHPTSLPEPDYSEFQSHPYHRASSRQPDYPGSQRNPDFAGSSSSGNYAGSRTHPDHFGSLEPDYPGAQSNSDHPGPRANLNHPGSRKNLEHTSFRINPYADSLGKPDYPGADIQPNSPPFFGEPDYPSAEDNQNLPSTWREPDYSDAENGHDYGSSETPKMTRGVLSRTSSIQPSFRHRSDDPVGSLWGENDYPEGIEMASMEMANSYGHSLPGAPGSGYVNPAYVGESGPVHAYGNPPLSECDWHKSPQGQKLIASLIPMTSRDRIKAIRNQPRTMEEKRNLRKIVDKEKSKQTHRILQLNCCIQCLNSISRAYRRSKNSLSEILNSISLWQKTLKIIGGKFGTSVLSYFNFLRWLLKFNIFSFILNFSFIIIPQFTVAKKNTLQFTGLEFFTGVGYFRDTVMYYGFYTNSTIQHGNSGASYNMQLAYIFTIGACLTTCFFSLLFSMAKYFRNNFINPHIYSGGITKLIFCWDFTVTHEKAVKLKQKNLSTEIRENLSELRQENSKLTFNQLLTRFSAYMVAWVVSTGVAIACCAAVYYLAEYNLEFLKTHSNPGAVLLLPFVVSCINLAVPCIYSMFRLVERYEMPRHEVYVLLIRNIFLKISIIGILCYYWLNTVALSGEECWETLIGQDIYRLLLMDFVFSLVNSFLGEFLRRIIGMQLITSLGLQEFDIARNVLELIYAQTLVWIGIFFCPLLPFIQMIMLFIMFYSKNISLMMNFQPPSKAWRASQMMTFFIFLLFFPSFTGVLCTLAITIWRLKPSADCGPFRGLPLFIHSIYSWIDTLSTRPGYLWVVWIYRNLIGSVHFFFILTLIVLIITYLYWQITEGRKIMIRLLHEQIINEGKDKMFLIEKLIKLQDMEKKANPSSLVLERREVEQQGFLHLGEHDGSLDLRSRRSVQEGNPRA.

Positions 1 to 289 are disordered; that stretch reads MSAYYRNNWS…DDPVGSLWGE (289 aa). The Extracellular segment spans residues 1-458; the sequence is MSAYYRNNWS…YFNFLRWLLK (458 aa). 3 stretches are compositionally biased toward polar residues: residues 20-30, 50-59, and 76-101; these read SGSQNRTQGYL, TRSNPYSVAS, and RSLS…SPDH. Positions 138–149 are enriched in low complexity; that stretch reads AGSSSSGNYAGS. A compositionally biased stretch (basic and acidic residues) spans 239 to 250; the sequence is REPDYSDAENGH. A helical transmembrane segment spans residues 459-479; the sequence is FNIFSFILNFSFIIIPQFTVA. Residues 480–485 lie on the Cytoplasmic side of the membrane; it reads KKNTLQ. The chain crosses the membrane as a helical span at residues 486–508; it reads FTGLEFFTGVGYFRDTVMYYGFY. The Extracellular segment spans residues 509–525; the sequence is TNSTIQHGNSGASYNMQ. Residues 526 to 546 form a helical membrane-spanning segment; it reads LAYIFTIGACLTTCFFSLLFS. The Cytoplasmic portion of the chain corresponds to 547-619; the sequence is MAKYFRNNFI…NQLLTRFSAY (73 aa). A helical transmembrane segment spans residues 620-640; the sequence is MVAWVVSTGVAIACCAAVYYL. Topologically, residues 641-654 are extracellular; sequence AEYNLEFLKTHSNP. Residues 655 to 675 traverse the membrane as a helical segment; that stretch reads GAVLLLPFVVSCINLAVPCIY. The Cytoplasmic portion of the chain corresponds to 676-698; the sequence is SMFRLVERYEMPRHEVYVLLIRN. The chain crosses the membrane as a helical span at residues 699 to 719; that stretch reads IFLKISIIGILCYYWLNTVAL. Residues 720–732 lie on the Extracellular side of the membrane; sequence SGEECWETLIGQD. The helical transmembrane segment at 733–753 threads the bilayer; that stretch reads IYRLLLMDFVFSLVNSFLGEF. Over 754–786 the chain is Cytoplasmic; sequence LRRIIGMQLITSLGLQEFDIARNVLELIYAQTL. A helical transmembrane segment spans residues 787–807; the sequence is VWIGIFFCPLLPFIQMIMLFI. The Extracellular portion of the chain corresponds to 808–835; that stretch reads MFYSKNISLMMNFQPPSKAWRASQMMTF. Residues 836–856 traverse the membrane as a helical segment; it reads FIFLLFFPSFTGVLCTLAITI. Residues 857–900 are Cytoplasmic-facing; the sequence is WRLKPSADCGPFRGLPLFIHSIYSWIDTLSTRPGYLWVVWIYRN. Residues 901–921 form a helical membrane-spanning segment; it reads LIGSVHFFFILTLIVLIITYL. Residues 922–1006 are Extracellular-facing; that stretch reads YWQITEGRKI…RSVQEGNPRA (85 aa).

The protein belongs to the TMC family.

It is found in the membrane. Its function is as follows. Probable component of an ion channel. Molecular function hasn't been characterized yet. The polypeptide is Transmembrane channel-like protein 5 (Homo sapiens (Human)).